Here is a 106-residue protein sequence, read N- to C-terminus: Evasin P1168 (106 aa).

The N-terminal stretch at 1–24 (MEVKISTFLQIAVLIVLGIHLIAA) is a signal peptide. 3 disulfide bridges follow: Cys-45–Cys-67, Cys-49–Cys-69, and Cys-60–Cys-80. 3 N-linked (GlcNAc...) asparagine glycosylation sites follow: Asn-48, Asn-54, and Asn-64.

The protein localises to the secreted. Its function is as follows. Salivary chemokine-binding protein which binds to host chemokines CXCL1, CXCL2 and CXCL8. This is Evasin P1168 from Ixodes ricinus (Common tick).